Reading from the N-terminus, the 562-residue chain is Formate--tetrahydrofolate ligase (562 aa).

77-84 (TPAGEGKS) provides a ligand contact to ATP.

This sequence belongs to the formate--tetrahydrofolate ligase family.

The enzyme catalyses (6S)-5,6,7,8-tetrahydrofolate + formate + ATP = (6R)-10-formyltetrahydrofolate + ADP + phosphate. It participates in one-carbon metabolism; tetrahydrofolate interconversion. This chain is Formate--tetrahydrofolate ligase, found in Corynebacterium jeikeium (strain K411).